A 1028-amino-acid polypeptide reads, in one-letter code: Contactin-6 (1028 aa).

The first 19 residues, 1-19 (MRLLWKLVILLPLINSSAG), serve as a signal peptide directing secretion. 6 consecutive Ig-like C2-type domains span residues 26-117 (PIFT…AKLQ), 122-208 (EDFE…RSVQ), 227-308 (PKIE…RNLA), 318-402 (PEWE…AELR), 408-495 (PDFS…GSLI), and 499-587 (RTVI…ESLS). 6 disulfide bridges follow: C50/C100, C144/C196, C249/C297, C339/C386, C431/C479, and C521/C577. Residues N65 and N193 are each glycosylated (N-linked (GlcNAc...) asparagine). N368, N377, and N468 each carry an N-linked (GlcNAc...) asparagine glycan. Fibronectin type-III domains follow at residues 600-698 (PPED…TKAS), 703-800 (APVN…SGED), 805-901 (APRG…TKKS), and 902-996 (PPSQ…KMSS). N-linked (GlcNAc...) asparagine glycosylation is found at N659, N765, N860, and N865. Y882 is modified (phosphotyrosine). The segment covering 887–902 (TGPSSPPVNVTTKKSP) has biased composition (polar residues). The disordered stretch occupies residues 887 to 908 (TGPSSPPVNVTTKKSPPSQPPA). N-linked (GlcNAc...) asparagine glycosylation is found at N895, N931, N956, and N957. The GPI-anchor amidated serine moiety is linked to residue S999. Positions 1000 to 1028 (RGIQFLEPSTHFLSIVIVIFHCFAIQPLI) are cleaved as a propeptide — removed in mature form.

It belongs to the immunoglobulin superfamily. Contactin family. In terms of assembly, interacts with PTPRG. As to expression, expressed in nervous system. Highly expressed in cerebellum. Expressed at intermediate level in thalamus, subthalamic nucleus. Weakly expressed in corpus callosum, caudate nucleus and spinal cord.

Its subcellular location is the cell membrane. Functionally, contactins mediate cell surface interactions during nervous system development. Participates in oligodendrocytes generation by acting as a ligand of NOTCH1. Its association with NOTCH1 promotes NOTCH1 activation through the released notch intracellular domain (NICD) and subsequent translocation to the nucleus. Involved in motor coordination. This chain is Contactin-6 (CNTN6), found in Homo sapiens (Human).